The sequence spans 1042 residues: Ubiquitin carboxyl-terminal hydrolase 38 (1042 aa).

Positions 445–949 (TGLINLGNTC…TAYVLLYKKQ (505 aa)) constitute a USP domain. Residue Cys454 is the Nucleophile of the active site. Residue His857 is the Proton acceptor of the active site.

This sequence belongs to the peptidase C19 family. Interacts with isoform 1 of FBXW7; this interaction prevents FBXW7-mediated degradation of MYC.

Its subcellular location is the cytoplasm. It localises to the nucleus. The catalysed reaction is Thiol-dependent hydrolysis of ester, thioester, amide, peptide and isopeptide bonds formed by the C-terminal Gly of ubiquitin (a 76-residue protein attached to proteins as an intracellular targeting signal).. In terms of biological role, deubiquitinating enzyme that plays a role in various cellular processes, including DNA repair, cell cycle regulation, and immune response. Plays a role in the inhibition of type I interferon signaling by mediating the 'Lys-33' to 'Lys-48' ubiquitination transition of TBK1 leading to its degradation. Cleaves the ubiquitin chain from the histone demethylase LSD1/KDM1A and prevents it from degradation by the 26S proteasome, thus maintaining LSD1 protein level in cells. Plays a role in the DNA damage response by regulating the deacetylase activity of HDAC1. Mechanistically, removes the 'Lys-63'-linked ubiquitin chain promoting the deacetylase activity of HDAC1 in response to DNA damage. Also acts as a specific deubiquitinase of histone deacetylase 3/HDAC3 and cleaves its 'Lys-63'-linked ubiquitin chains to lower its histone deacetylase activity. Regulates MYC levels and cell proliferation via antagonizing ubiquitin E3 ligase FBXW7 thereby preventing MYC 'Lys-48'-linked ubiquitination and degradation. Participates in antiviral response by removing both 'Lys-48'-linked and 'Lys-63'-linked polyubiquitination of Zika virus envelope protein E. Constitutively associated with IL-33R/IL1RL1, deconjugates its 'Lys-27'-linked polyubiquitination resulting in its autophagic degradation. The protein is Ubiquitin carboxyl-terminal hydrolase 38 (Usp38) of Mus musculus (Mouse).